Reading from the N-terminus, the 478-residue chain is Ninja-family protein 8 (478 aa).

3 disordered regions span residues 1-247 (MDDD…LTPG), 337-374 (FTAK…EKKA), and 454-478 (DAPA…SAEN). Over residues 23 to 35 (KARDAPLEPKAEP) the composition is skewed to basic and acidic residues. The segment covering 169-179 (ISISTDDGSTG) has biased composition (polar residues). Positions 180–189 (ENEDVAESEA) are enriched in acidic residues. The segment covering 233 to 242 (SFSGSESSSG) has biased composition (low complexity). Positions 339-358 (AKDKADQTGTKQVDDGKKPQ) are enriched in basic and acidic residues.

This sequence belongs to the Ninja family.

It localises to the nucleus. In Zea mays (Maize), this protein is Ninja-family protein 8.